The primary structure comprises 142 residues: MAKKVTGYLKLQVPAGAANPSPPIGPALGQRGLNIMEFCKAFNAQTQKIEKNTPIPVVITIYADRSFTFEMKTPPMSFFLKQAAKVQSGSKTPGRDSAGKVTKAQVREIAEKKMKDLNCDTVEAAMKMVEGSARSMGLEVAG.

It belongs to the universal ribosomal protein uL11 family. Part of the ribosomal stalk of the 50S ribosomal subunit. Interacts with L10 and the large rRNA to form the base of the stalk. L10 forms an elongated spine to which L12 dimers bind in a sequential fashion forming a multimeric L10(L12)X complex. One or more lysine residues are methylated.

Forms part of the ribosomal stalk which helps the ribosome interact with GTP-bound translation factors. The chain is Large ribosomal subunit protein uL11 from Afipia carboxidovorans (strain ATCC 49405 / DSM 1227 / KCTC 32145 / OM5) (Oligotropha carboxidovorans).